A 283-amino-acid polypeptide reads, in one-letter code: Phosphatidylserine decarboxylase proenzyme (283 aa).

Active-site charge relay system; for autoendoproteolytic cleavage activity residues include Asp-96, His-152, and Ser-250. The Schiff-base intermediate with substrate; via pyruvic acid; for decarboxylase activity role is filled by Ser-250. Ser-250 carries the pyruvic acid (Ser); by autocatalysis modification.

It belongs to the phosphatidylserine decarboxylase family. PSD-B subfamily. Prokaryotic type I sub-subfamily. As to quaternary structure, heterodimer of a large membrane-associated beta subunit and a small pyruvoyl-containing alpha subunit. Requires pyruvate as cofactor. In terms of processing, is synthesized initially as an inactive proenzyme. Formation of the active enzyme involves a self-maturation process in which the active site pyruvoyl group is generated from an internal serine residue via an autocatalytic post-translational modification. Two non-identical subunits are generated from the proenzyme in this reaction, and the pyruvate is formed at the N-terminus of the alpha chain, which is derived from the carboxyl end of the proenzyme. The autoendoproteolytic cleavage occurs by a canonical serine protease mechanism, in which the side chain hydroxyl group of the serine supplies its oxygen atom to form the C-terminus of the beta chain, while the remainder of the serine residue undergoes an oxidative deamination to produce ammonia and the pyruvoyl prosthetic group on the alpha chain. During this reaction, the Ser that is part of the protease active site of the proenzyme becomes the pyruvoyl prosthetic group, which constitutes an essential element of the active site of the mature decarboxylase.

The protein localises to the cell membrane. It carries out the reaction a 1,2-diacyl-sn-glycero-3-phospho-L-serine + H(+) = a 1,2-diacyl-sn-glycero-3-phosphoethanolamine + CO2. The protein operates within phospholipid metabolism; phosphatidylethanolamine biosynthesis; phosphatidylethanolamine from CDP-diacylglycerol: step 2/2. Its function is as follows. Catalyzes the formation of phosphatidylethanolamine (PtdEtn) from phosphatidylserine (PtdSer). This is Phosphatidylserine decarboxylase proenzyme from Acinetobacter baumannii (strain AB0057).